The following is a 360-amino-acid chain: Phospho-N-acetylmuramoyl-pentapeptide-transferase (360 aa).

The Periplasmic portion of the chain corresponds to Met-1–Arg-25. Residues Ala-26–Ala-46 form a helical membrane-spanning segment. The Cytoplasmic segment spans residues Arg-47–Thr-71. Residues Pro-72–Tyr-92 form a helical membrane-spanning segment. A topological domain (periplasmic) is located at residue Pro-93. A helical membrane pass occupies residues Ser-94–Val-114. Topologically, residues Asp-115–Arg-131 are cytoplasmic. A helical transmembrane segment spans residues Trp-132–Gly-152. At Lys-153–Asp-167 the chain is on the periplasmic side. The chain crosses the membrane as a helical span at residues Val-168–Gly-188. The Cytoplasmic segment spans residues Asn-189 to Asp-198. Residues Gly-199 to Thr-219 traverse the membrane as a helical segment. Topologically, residues Gly-220–His-235 are periplasmic. The helical transmembrane segment at Ala-236–Phe-256 threads the bilayer. Residues Asn-257 to Gln-262 are Cytoplasmic-facing. The helical transmembrane segment at Val-263–Leu-283 threads the bilayer. Residues Leu-284–Glu-287 are Periplasmic-facing. A helical transmembrane segment spans residues Phe-288–Val-308. Residues Gly-309–Arg-337 are Cytoplasmic-facing. The chain crosses the membrane as a helical span at residues Val-338–Lys-358. Over Val-359 to Arg-360 the chain is Periplasmic.

It belongs to the glycosyltransferase 4 family. MraY subfamily. Mg(2+) serves as cofactor.

It localises to the cell inner membrane. The catalysed reaction is UDP-N-acetyl-alpha-D-muramoyl-L-alanyl-gamma-D-glutamyl-meso-2,6-diaminopimeloyl-D-alanyl-D-alanine + di-trans,octa-cis-undecaprenyl phosphate = di-trans,octa-cis-undecaprenyl diphospho-N-acetyl-alpha-D-muramoyl-L-alanyl-D-glutamyl-meso-2,6-diaminopimeloyl-D-alanyl-D-alanine + UMP. The protein operates within cell wall biogenesis; peptidoglycan biosynthesis. Functionally, catalyzes the initial step of the lipid cycle reactions in the biosynthesis of the cell wall peptidoglycan: transfers peptidoglycan precursor phospho-MurNAc-pentapeptide from UDP-MurNAc-pentapeptide onto the lipid carrier undecaprenyl phosphate, yielding undecaprenyl-pyrophosphoryl-MurNAc-pentapeptide, known as lipid I. In Salmonella paratyphi C (strain RKS4594), this protein is Phospho-N-acetylmuramoyl-pentapeptide-transferase.